A 459-amino-acid chain; its full sequence is MHILMIGLNYKTAPVEIREKFSFQDSELPQALHQLRQMKSILECTIVSTCNRTELYVVADQLHTGRHFTKTFLADWFKLPKDEFTPFLTIRENDHAIEHLFRVVTGLDSMILGETQILGQVRNSFFIAQEEQVTGSIFNHLFKQAITLAKRAHSETDIGQNAVSVSYAAVELGKKIFDDFKGKQVLILGAGKMGELTAKHLHSNGAEQVTVINRTREKAAELAKRFLGVDRPYNELTEAIVEADILISSTGATGYVVTSDMVSHALKKRKGRPLFMVDIAVPRDLDPALASHDDVYLYDIDDLQNIVQTNLEERRTEAEKIELLIEEELVEFKQWLNTLGVVPIITALRTKALTVQGETMESIERKLPNLTEREKKVLRKHTKSIVNQLLRDPITRIKELANAPEREEALDLFTKIFALEEELAEQEKQEKVKQAEQEWLAKKRPITCMEKQSHVMVKS.

Substrate-binding positions include Thr49 to Arg52, Ser109, Glu114 to Gln116, and Gln120. Cys50 functions as the Nucleophile in the catalytic mechanism. Position 189–194 (Gly189–Gly194) interacts with NADP(+).

It belongs to the glutamyl-tRNA reductase family. In terms of assembly, homodimer.

It carries out the reaction (S)-4-amino-5-oxopentanoate + tRNA(Glu) + NADP(+) = L-glutamyl-tRNA(Glu) + NADPH + H(+). It functions in the pathway porphyrin-containing compound metabolism; protoporphyrin-IX biosynthesis; 5-aminolevulinate from L-glutamyl-tRNA(Glu): step 1/2. In terms of biological role, catalyzes the NADPH-dependent reduction of glutamyl-tRNA(Glu) to glutamate 1-semialdehyde (GSA). This chain is Glutamyl-tRNA reductase, found in Halalkalibacterium halodurans (strain ATCC BAA-125 / DSM 18197 / FERM 7344 / JCM 9153 / C-125) (Bacillus halodurans).